A 380-amino-acid polypeptide reads, in one-letter code: Transcription factor RF2a (380 aa).

The interval 1-57 is disordered; sequence MNREKSPIPGDGGDGLPPQATRRAGPPAAAAAAEYDISRMPDFPTRNPGHRRAHSEI. A compositionally biased stretch (low complexity) spans 16-33; that stretch reads LPPQATRRAGPPAAAAAA. An activation of RTBV promoter region spans residues 56-108; it reads EILSLPEDLDLCAAGGGDGPSLSDENDEELFSMFLDVEKLNSTCGASSEAEAE. One can recognise a bZIP domain in the interval 181 to 244; that stretch reads DPKRAKRIWA…SGLTTENSEL (64 aa). Residues 183-204 form a basic motif region; sequence KRAKRIWANRQSAARSKERKMR. The interval 209–244 is leucine-zipper; it reads LERKVQTLQTEATTLSAQLALLQRDTSGLTTENSEL. The tract at residues 283–357 is interaction with TBP2; sequence GGMMMNFGGM…AQQLQQAARD (75 aa). The segment covering 326-355 has biased composition (low complexity); sequence QAQQQQVLHPQHQQQQPLHPLQAQQLQQAA. The segment at 326-380 is disordered; that stretch reads QAQQQQVLHPQHQQQQPLHPLQAQQLQQAARDLKMKSPMGGQSQWGDGKSGSSGN.

This sequence belongs to the bZIP family. Binds DNA as a homodimer or as a heterodimer with RF2b. The heterodimer binds stronger to DNA than the homodimer. Interacts with TBP2. In terms of tissue distribution, expressed at high levels in levels in leaf sheath, moderate levels in leaf blade, but not in roots. Predominantly expressed in vascular tissues.

The protein resides in the nucleus. Functionally, transcription factor probably involved in vascular development and shoot tissue organization. Binds to the DNA sequence 5'-CCGAGTGTGCCCCTGG-3' present in the promoter region Box II of the phloem-specific rice tungro bacilliform virus (RTBV) promoter. May regulate tissue-specific expression of the RTBV promoter and virus replication. This Oryza sativa subsp. japonica (Rice) protein is Transcription factor RF2a (RF2a).